The chain runs to 401 residues: uncharacterized protein (401 aa).

10 helical membrane-spanning segments follow: residues 20–40 (FFGELLTSLTGAMMGPFMVLY), 49–69 (IMMPMLIISLQPFADIFLTLA), 83–100 (ILTALLLQSAAMTGFVFA), 104–121 (YVFAILYVMNGIGRSLYI), 140–160 (VFAVINAIYSTGLTAGPLVGM), 167–187 (PVWIFALDAAALFIYFLIAAL), 207–227 (FTIYRPVLLLLLLSLPISMLY), 248–268 (MLTIYSAAKALFSCVLQVPLV), 289–309 (LAAAGFACSTSLTMLLVTAAV), and 357–377 (GLILTSFGGEVIFYALAVCLL).

The protein belongs to the major facilitator superfamily.

Its subcellular location is the cell membrane. This is an uncharacterized protein from Bacillus subtilis (strain 168).